Here is a 576-residue protein sequence, read N- to C-terminus: Arginine--tRNA ligase (576 aa).

A 'HIGH' region motif is present at residues 122–132 (PNVAKQMHVGH).

This sequence belongs to the class-I aminoacyl-tRNA synthetase family. Monomer.

It is found in the cytoplasm. It carries out the reaction tRNA(Arg) + L-arginine + ATP = L-arginyl-tRNA(Arg) + AMP + diphosphate. The polypeptide is Arginine--tRNA ligase (Yersinia pseudotuberculosis serotype O:1b (strain IP 31758)).